The following is a 318-amino-acid chain: Glutathione synthetase (318 aa).

In terms of domain architecture, ATP-grasp spans 129–314 (KLAITEFPDL…VPEMFAVALE (186 aa)). Residue 155-211 (HAAQGDVIVKPLDDMGGTGIFRLQRSEPNLNAILETLTDNGTRTIMAQRYIPEIVKG) coordinates ATP. The Mg(2+) site is built by Glu-285 and Asn-287.

Belongs to the prokaryotic GSH synthase family. The cofactor is Mg(2+). Mn(2+) serves as cofactor.

It carries out the reaction gamma-L-glutamyl-L-cysteine + glycine + ATP = glutathione + ADP + phosphate + H(+). Its pathway is sulfur metabolism; glutathione biosynthesis; glutathione from L-cysteine and L-glutamate: step 2/2. The protein is Glutathione synthetase of Bordetella pertussis (strain Tohama I / ATCC BAA-589 / NCTC 13251).